A 708-amino-acid chain; its full sequence is Prolyl 3-hydroxylase 2 (708 aa).

Positions 1 to 24 (MRERIWAPPLLLLLPLLLPPPLWG) are cleaved as a signal peptide. TPR repeat units lie at residues 44 to 77 (FDLL…HRRL), 148 to 181 (RVPY…NPEH), 210 to 243 (HMES…YFVE), and 306 to 339 (PLHY…HPDD). Residues asparagine 449 and asparagine 549 are each glycosylated (N-linked (GlcNAc...) asparagine). The 115-residue stretch at 557 to 671 (THMVCRTALS…RCAVALWFTL (115 aa)) folds into the Fe2OG dioxygenase domain. Histidine 580, aspartate 582, and histidine 652 together coordinate Fe cation. Arginine 662 is a catalytic residue. Positions 705 to 708 (KDEL) match the Prevents secretion from ER motif.

It belongs to the leprecan family. The cofactor is Fe cation. Requires L-ascorbate as cofactor. Expression localized to the epithelia of bile ducts and to the sacroplasm of heart muscle and skeletal muscle. In the pancreas, localized to a subpopulation of Langerhans islet cells and in the salivary gland, expressed in acinar cells (at protein level). Expressed in adult heart, placenta, lung, liver, skeletal muscle and kidney. Detected in fetal heart, spleen, lung, liver skeletal muscle and kidney.

Its subcellular location is the endoplasmic reticulum. The protein resides in the sarcoplasmic reticulum. It localises to the golgi apparatus. It catalyses the reaction L-prolyl-[collagen] + 2-oxoglutarate + O2 = trans-3-hydroxy-L-prolyl-[collagen] + succinate + CO2. Its activity is regulated as follows. Inhibited by pyridine 2,4-dicarboxylate, an analog of 2-oxoglutarate. Prolyl 3-hydroxylase that catalyzes the post-translational formation of 3-hydroxyproline on collagens. Contributes to proline 3-hydroxylation of collagen COL4A1 and COL1A1 in tendons, the eye sclera and in the eye lens capsule. Has high activity with the type IV collagen COL4A1, and lower activity with COL1A1. Catalyzes hydroxylation of the first Pro in Gly-Pro-Hyp sequences where Hyp is 4-hydroxyproline. Has no activity on substrates that lack 4-hydroxyproline in the third position. The chain is Prolyl 3-hydroxylase 2 from Homo sapiens (Human).